The following is a 142-amino-acid chain: MQTATVLVEKSDYRPSEDEPFMNDRQLEYFKQKLLAWKEEILRESRETVSHLQKETENHADLADRASSETDRALELRTRDRQRKLISKIDQALRRVEDGSYGYCEETGEPIGLARLEARPTATMSVEAQERHERRERVHRDD.

3 disordered regions span residues methionine 1–proline 20, histidine 51–threonine 70, and arginine 119–aspartate 142. The dksA C4-type zinc-finger motif lies at cysteine 104–alanine 128. The span at alanine 128–aspartate 142 shows a compositional bias: basic and acidic residues.

It belongs to the DksA family. In terms of assembly, interacts directly with the RNA polymerase.

It is found in the cytoplasm. In terms of biological role, transcription factor that acts by binding directly to the RNA polymerase (RNAP). Required for negative regulation of rRNA expression and positive regulation of several amino acid biosynthesis promoters. In Caulobacter vibrioides (strain ATCC 19089 / CIP 103742 / CB 15) (Caulobacter crescentus), this protein is RNA polymerase-binding transcription factor DksA.